The chain runs to 153 residues: 3-dehydroquinate dehydratase (153 aa).

The active-site Proton acceptor is the Tyr-26. Residues Asn-77, His-83, and Asp-90 each coordinate substrate. The active-site Proton donor is the His-103. Substrate-binding positions include Leu-104–Ser-105 and Arg-114.

It belongs to the type-II 3-dehydroquinase family. In terms of assembly, homododecamer.

The catalysed reaction is 3-dehydroquinate = 3-dehydroshikimate + H2O. It participates in metabolic intermediate biosynthesis; chorismate biosynthesis; chorismate from D-erythrose 4-phosphate and phosphoenolpyruvate: step 3/7. Catalyzes a trans-dehydration via an enolate intermediate. The polypeptide is 3-dehydroquinate dehydratase (Colwellia psychrerythraea (strain 34H / ATCC BAA-681) (Vibrio psychroerythus)).